The following is a 411-amino-acid chain: Peptidase T (411 aa).

Histidine 79 lines the Zn(2+) pocket. Aspartate 81 is a catalytic residue. Aspartate 142 provides a ligand contact to Zn(2+). The active-site Proton acceptor is the glutamate 176. Zn(2+) is bound by residues glutamate 177, aspartate 199, and histidine 381.

The protein belongs to the peptidase M20B family. Requires Zn(2+) as cofactor.

The protein resides in the cytoplasm. It carries out the reaction Release of the N-terminal residue from a tripeptide.. Functionally, cleaves the N-terminal amino acid of tripeptides. This is Peptidase T from Geobacillus kaustophilus (strain HTA426).